The chain runs to 458 residues: Dihydrolipoyl dehydrogenase (458 aa).

FAD is bound by residues 30–38 (DKGKLGGTC), Lys-47, and Ala-112. Cys-38 and Cys-43 form a disulfide bridge. Residues 177–181 (GGGVI), Glu-200, and 263–266 (AIGR) each bind NAD(+). Positions 305 and 313 each coordinate FAD. His-437 acts as the Proton acceptor in catalysis.

Belongs to the class-I pyridine nucleotide-disulfide oxidoreductase family. In terms of assembly, homodimer. FAD is required as a cofactor.

It localises to the cytoplasm. It catalyses the reaction N(6)-[(R)-dihydrolipoyl]-L-lysyl-[protein] + NAD(+) = N(6)-[(R)-lipoyl]-L-lysyl-[protein] + NADH + H(+). The protein operates within ketone degradation; acetoin degradation. The polypeptide is Dihydrolipoyl dehydrogenase (acoL) (Bacillus subtilis (strain 168)).